The following is a 464-amino-acid chain: Phosphoglucosamine mutase (464 aa).

Ser-112 serves as the catalytic Phosphoserine intermediate. Ser-112, Asp-252, Asp-254, and Asp-256 together coordinate Mg(2+). Ser-112 is subject to Phosphoserine.

The protein belongs to the phosphohexose mutase family. It depends on Mg(2+) as a cofactor. In terms of processing, activated by phosphorylation.

It carries out the reaction alpha-D-glucosamine 1-phosphate = D-glucosamine 6-phosphate. Functionally, catalyzes the conversion of glucosamine-6-phosphate to glucosamine-1-phosphate. This chain is Phosphoglucosamine mutase, found in Synechococcus sp. (strain CC9902).